The following is a 658-amino-acid chain: Glycogen debranching enzyme (658 aa).

Catalysis depends on Asp336, which acts as the Nucleophile. The active-site Proton donor is Glu371. The tract at residues 459-484 is disordered; sequence EANGEENRDGTNSNYSDNHGKEGLGG.

Belongs to the glycosyl hydrolase 13 family.

The enzyme catalyses Hydrolysis of (1-&gt;6)-alpha-D-glucosidic linkages to branches with degrees of polymerization of three or four glucose residues in limit dextrin.. Its pathway is glycan degradation; glycogen degradation. In terms of biological role, removes maltotriose and maltotetraose chains that are attached by 1,6-alpha-linkage to the limit dextrin main chain, generating a debranched limit dextrin. The chain is Glycogen debranching enzyme from Salmonella enteritidis PT4 (strain P125109).